Reading from the N-terminus, the 358-residue chain is CX3C chemokine receptor 1 (358 aa).

The Extracellular segment spans residues Met-1–Asp-26. The helical transmembrane segment at Ile-27–Leu-47 threads the bilayer. Residues Val-48–Asp-68 lie on the Cytoplasmic side of the membrane. A helical membrane pass occupies residues Ile-69–Thr-89. Over His-90 to Leu-105 the chain is Extracellular. A disulfide bridge links Cys-103 with Cys-176. A helical transmembrane segment spans residues Ile-106–Val-126. Residues Asp-127 to Gly-147 lie on the Cytoplasmic side of the membrane. The helical transmembrane segment at Val-148–Phe-168 threads the bilayer. The Extracellular portion of the chain corresponds to Thr-169 to Glu-186. Residues Ile-187 to Ile-207 form a helical membrane-spanning segment. Over Met-208–Arg-232 the chain is Cytoplasmic. The chain crosses the membrane as a helical span at residues Leu-233–Phe-253. Topologically, residues Leu-254–Ala-275 are extracellular. A helical transmembrane segment spans residues Ile-276–Phe-296. At Ala-297–Leu-358 the chain is on the cytoplasmic side. Thr-349 carries the post-translational modification Phosphothreonine.

Belongs to the G-protein coupled receptor 1 family. Found in a ternary complex with CX3CL1 and ITGAV:ITGB3 or ITGA4:ITGB1. This protein is not N-glycosylated which is unusual for G-protein-coupled receptors.

It localises to the cell membrane. In terms of biological role, receptor for the C-X3-C chemokine fractalkine (CX3CL1) present on many early leukocyte cells; CX3CR1-CX3CL1 signaling exerts distinct functions in different tissue compartments, such as immune response, inflammation, cell adhesion and chemotaxis. CX3CR1-CX3CL1 signaling mediates cell migratory functions. Responsible for the recruitment of natural killer (NK) cells to inflamed tissues. Acts as a regulator of inflammation process leading to atherogenesis by mediating macrophage and monocyte recruitment to inflamed atherosclerotic plaques, promoting cell survival. Involved in airway inflammation by promoting interleukin 2-producing T helper (Th2) cell survival in inflamed lung. Involved in the migration of circulating monocytes to non-inflamed tissues, where they differentiate into macrophages and dendritic cells. Acts as a negative regulator of angiogenesis, probably by promoting macrophage chemotaxis. Plays a key role in brain microglia by regulating inflammatory response in the central nervous system (CNS) and regulating synapse maturation. Required to restrain the microglial inflammatory response in the CNS and the resulting parenchymal damage in response to pathological stimuli. Involved in brain development by participating in synaptic pruning, a natural process during which brain microglia eliminates extra synapses during postnatal development. Synaptic pruning by microglia is required to promote the maturation of circuit connectivity during brain development. Acts as an important regulator of the gut microbiota by controlling immunity to intestinal bacteria and fungi. Expressed in lamina propria dendritic cells in the small intestine, which form transepithelial dendrites capable of taking up bacteria in order to provide defense against pathogenic bacteria. Required to initiate innate and adaptive immune responses against dissemination of commensal fungi (mycobiota) component of the gut: expressed in mononuclear phagocytes (MNPs) and acts by promoting induction of antifungal IgG antibodies response to confer protection against disseminated C.albicans or C.auris infection. Also acts as a receptor for C-C motif chemokine CCL26, inducing cell chemotaxis. The chain is CX3C chemokine receptor 1 from Bos taurus (Bovine).